The sequence spans 238 residues: MSQSLIVALDFPGKQDVEQFLRHFEGEELFVKVGMELFYKEGPAIITYLKEKGHKIFLDLKLHDIPNTVKSAMRSLASLDVDMVNVHAAGGSSMMKAAIEGLEEGKQEGKERPICIAVTQLTSTSETMMKKEIGIEKTLEEAVAHYAKLTKESGLDGVVCSTLEVPKLREVCGSEFVTVTPGIRLASDDVNDQVRVATPKRARELGSSYIVVGRSITKAENPLEAYKTVKQQWEGVTV.

Substrate contacts are provided by residues Asp10, Lys32, 59 to 68, Thr122, Arg184, Gln193, Gly213, and Arg214; that span reads DLKLHDIPNT. Lys61 acts as the Proton donor in catalysis.

The protein belongs to the OMP decarboxylase family. Type 1 subfamily. As to quaternary structure, homodimer.

It catalyses the reaction orotidine 5'-phosphate + H(+) = UMP + CO2. The protein operates within pyrimidine metabolism; UMP biosynthesis via de novo pathway; UMP from orotate: step 2/2. In terms of biological role, catalyzes the decarboxylation of orotidine 5'-monophosphate (OMP) to uridine 5'-monophosphate (UMP). This chain is Orotidine 5'-phosphate decarboxylase, found in Bacillus cereus (strain AH820).